Reading from the N-terminus, the 357-residue chain is Actin, cytoplasmic (357 aa).

This sequence belongs to the actin family. Post-translationally, met-1 may be removed after translation.

It is found in the cytoplasm. Its subcellular location is the cytoskeleton. The enzyme catalyses ATP + H2O = ADP + phosphate + H(+). Actins are highly conserved proteins that are involved in various types of cell motility and are ubiquitously expressed in all eukaryotic cells. The chain is Actin, cytoplasmic from Oxytricha fallax.